The chain runs to 415 residues: Probable glucuronosyltransferase Os01g0926600 (415 aa).

Residues 1–4 (MAMR) are Cytoplasmic-facing. A helical; Signal-anchor for type II membrane protein membrane pass occupies residues 5 to 25 (LSSAAVALALLLAATALEDVA). The Lumenal portion of the chain corresponds to 26–415 (RGQDTERIEG…QGPVGDLKPW (390 aa)). 2 N-linked (GlcNAc...) asparagine glycosylation sites follow: Asn-142 and Asn-403.

Belongs to the glycosyltransferase 47 family.

The protein resides in the golgi apparatus membrane. Its function is as follows. Involved in the synthesis of glucuronoxylan hemicellulose in secondary cell walls. The protein is Probable glucuronosyltransferase Os01g0926600 of Oryza sativa subsp. japonica (Rice).